The chain runs to 353 residues: Photosystem II protein D1 (353 aa).

Position 2 is an N-acetylthreonine (Thr2). At Thr2 the chain carries Phosphothreonine. A run of 3 helical transmembrane segments spans residues 29-46 (YIGW…TATS), 118-133 (HFLL…EWEL), and 142-156 (WIAV…AAAA). His118 lines the chlorophyll a pocket. Residue Tyr126 participates in pheophytin a binding. The [CaMn4O5] cluster site is built by Asp170 and Glu189. A helical membrane pass occupies residues 197-218 (FHMLGVAGVFGGSLFSAMHGSL). His198 serves as a coordination point for chlorophyll a. A quinone is bound by residues His215 and 264-265 (SF). A Fe cation-binding site is contributed by His215. His272 provides a ligand contact to Fe cation. Residues 274–288 (FLAAWPVVGIWFTAL) traverse the membrane as a helical segment. [CaMn4O5] cluster is bound by residues His332, Glu333, Asp342, and Ala344. The propeptide occupies 345 to 353 (AVEAPSTNG).

Belongs to the reaction center PufL/M/PsbA/D family. In terms of assembly, PSII is composed of 1 copy each of membrane proteins PsbA, PsbB, PsbC, PsbD, PsbE, PsbF, PsbH, PsbI, PsbJ, PsbK, PsbL, PsbM, PsbT, PsbX, PsbY, PsbZ, Psb30/Ycf12, at least 3 peripheral proteins of the oxygen-evolving complex and a large number of cofactors. It forms dimeric complexes. The D1/D2 heterodimer binds P680, chlorophylls that are the primary electron donor of PSII, and subsequent electron acceptors. It shares a non-heme iron and each subunit binds pheophytin, quinone, additional chlorophylls, carotenoids and lipids. D1 provides most of the ligands for the Mn4-Ca-O5 cluster of the oxygen-evolving complex (OEC). There is also a Cl(-1) ion associated with D1 and D2, which is required for oxygen evolution. The PSII complex binds additional chlorophylls, carotenoids and specific lipids. serves as cofactor. Tyr-161 forms a radical intermediate that is referred to as redox-active TyrZ, YZ or Y-Z. In terms of processing, C-terminally processed by CTPA; processing is essential to allow assembly of the oxygen-evolving complex and thus photosynthetic growth.

It is found in the plastid. It localises to the chloroplast thylakoid membrane. It catalyses the reaction 2 a plastoquinone + 4 hnu + 2 H2O = 2 a plastoquinol + O2. In terms of biological role, photosystem II (PSII) is a light-driven water:plastoquinone oxidoreductase that uses light energy to abstract electrons from H(2)O, generating O(2) and a proton gradient subsequently used for ATP formation. It consists of a core antenna complex that captures photons, and an electron transfer chain that converts photonic excitation into a charge separation. The D1/D2 (PsbA/PsbD) reaction center heterodimer binds P680, the primary electron donor of PSII as well as several subsequent electron acceptors. The protein is Photosystem II protein D1 of Nandina domestica (Heavenly bamboo).